The primary structure comprises 934 residues: 2-oxoglutarate dehydrogenase E1 component (934 aa).

This sequence belongs to the alpha-ketoglutarate dehydrogenase family. Homodimer. Part of the 2-oxoglutarate dehydrogenase (OGDH) complex composed of E1 (2-oxoglutarate dehydrogenase), E2 (dihydrolipoamide succinyltransferase) and E3 (dihydrolipoamide dehydrogenase); the complex contains multiple copies of the three enzymatic components (E1, E2 and E3). Thiamine diphosphate is required as a cofactor.

The catalysed reaction is N(6)-[(R)-lipoyl]-L-lysyl-[protein] + 2-oxoglutarate + H(+) = N(6)-[(R)-S(8)-succinyldihydrolipoyl]-L-lysyl-[protein] + CO2. E1 component of the 2-oxoglutarate dehydrogenase (OGDH) complex which catalyzes the decarboxylation of 2-oxoglutarate, the first step in the conversion of 2-oxoglutarate to succinyl-CoA and CO(2). The sequence is that of 2-oxoglutarate dehydrogenase E1 component from Staphylococcus epidermidis (strain ATCC 35984 / DSM 28319 / BCRC 17069 / CCUG 31568 / BM 3577 / RP62A).